The sequence spans 177 residues: Large ribosomal subunit protein uL6 (177 aa).

The protein belongs to the universal ribosomal protein uL6 family. Part of the 50S ribosomal subunit.

Its function is as follows. This protein binds to the 23S rRNA, and is important in its secondary structure. It is located near the subunit interface in the base of the L7/L12 stalk, and near the tRNA binding site of the peptidyltransferase center. The polypeptide is Large ribosomal subunit protein uL6 (Salmonella dublin (strain CT_02021853)).